Here is a 310-residue protein sequence, read N- to C-terminus: Malate dehydrogenase (310 aa).

NAD(+) contacts are provided by residues 7 to 12 (GAGNVG) and D32. Substrate contacts are provided by R81 and R87. NAD(+) contacts are provided by residues N94 and 117–119 (VSN). N119 and R150 together coordinate substrate. The active-site Proton acceptor is the H174.

It belongs to the LDH/MDH superfamily. MDH type 3 family.

The enzyme catalyses (S)-malate + NAD(+) = oxaloacetate + NADH + H(+). Catalyzes the reversible oxidation of malate to oxaloacetate. In Chlorobium phaeobacteroides (strain DSM 266 / SMG 266 / 2430), this protein is Malate dehydrogenase.